Consider the following 275-residue polypeptide: tRNA (guanine-N(1)-)-methyltransferase (275 aa).

S-adenosyl-L-methionine is bound by residues glycine 139 and 159-164 (IGDYIL).

The protein belongs to the RNA methyltransferase TrmD family. As to quaternary structure, homodimer.

The protein localises to the cytoplasm. It carries out the reaction guanosine(37) in tRNA + S-adenosyl-L-methionine = N(1)-methylguanosine(37) in tRNA + S-adenosyl-L-homocysteine + H(+). In terms of biological role, specifically methylates guanosine-37 in various tRNAs. This is tRNA (guanine-N(1)-)-methyltransferase from Lachnoclostridium phytofermentans (strain ATCC 700394 / DSM 18823 / ISDg) (Clostridium phytofermentans).